The chain runs to 185 residues: Meiotically up-regulated gene 5 protein (185 aa).

Its subcellular location is the cytoplasm. Required for correct meiotic chromosome segregation. In Schizosaccharomyces pombe (strain 972 / ATCC 24843) (Fission yeast), this protein is Meiotically up-regulated gene 5 protein (mug5).